A 348-amino-acid chain; its full sequence is GTPase Obg (348 aa).

Residues 1-159 (MKFLDQAKIY…KTIILRLKLI (159 aa)) enclose the Obg domain. In terms of domain architecture, OBG-type G spans 160 to 327 (ADAGLVGLPN…VLRLAADEIW (168 aa)). Residues 166-173 (GLPNAGKS), 191-195 (FTTLT), 212-215 (DIPG), 279-282 (NKMD), and 308-310 (SGV) each bind GTP. Mg(2+)-binding residues include Ser-173 and Thr-193.

It belongs to the TRAFAC class OBG-HflX-like GTPase superfamily. OBG GTPase family. In terms of assembly, monomer. Requires Mg(2+) as cofactor.

It is found in the cytoplasm. An essential GTPase which binds GTP, GDP and possibly (p)ppGpp with moderate affinity, with high nucleotide exchange rates and a fairly low GTP hydrolysis rate. Plays a role in control of the cell cycle, stress response, ribosome biogenesis and in those bacteria that undergo differentiation, in morphogenesis control. This chain is GTPase Obg, found in Parvibaculum lavamentivorans (strain DS-1 / DSM 13023 / NCIMB 13966).